A 317-amino-acid chain; its full sequence is Melanocyte-stimulating hormone receptor (317 aa).

At 1–37 the chain is on the extracellular side; sequence MPVLGSQRRLLGSLNCTPPATFPLMLAPNRTGPQCLE. N29 is a glycosylation site (N-linked (GlcNAc...) asparagine). Residues 38-63 traverse the membrane as a helical segment; that stretch reads VSIPNGLFLSLGLVSLVENVLVVAAI. Over 64–72 the chain is Cytoplasmic; the sequence is AKNSNLHSP. The chain crosses the membrane as a helical span at residues 73–93; the sequence is MYYFICCLAVSDLLVSVSNVL. Over 94–118 the chain is Extracellular; the sequence is ETAVMLLLEAGALAARAAVVQQLDN. The helical transmembrane segment at 119–140 threads the bilayer; that stretch reads VIDVLICGSMVSSLCFLGAIAV. The Cytoplasmic portion of the chain corresponds to 141-163; the sequence is DRYISIFYALRYHSVVTLPRAWR. A helical membrane pass occupies residues 164 to 183; the sequence is IIAAIWVASILTSLLFITYY. The Extracellular portion of the chain corresponds to 184–191; that stretch reads NHTVVLLC. A helical membrane pass occupies residues 192 to 211; sequence LVGFFIAMLALMAVLYVHML. Topologically, residues 212–240 are cytoplasmic; it reads ARACQHARGIARLQKRQRPIHRGFGLKGA. A helical transmembrane segment spans residues 241–266; that stretch reads ATLTILLGVFFLCWGPFFLHLSLIVL. The Extracellular segment spans residues 267–279; that stretch reads CPQHPTCGCIFKN. A helical transmembrane segment spans residues 280 to 300; sequence FNLFLALIICNAIVDPLIYAF. At 301–317 the chain is on the cytoplasmic side; the sequence is RSQELRKTLQEVLQCSW. C315 is lipidated: S-palmitoyl cysteine.

This sequence belongs to the G-protein coupled receptor 1 family. As to quaternary structure, interacts with MGRN1, but does not undergo MGRN1-mediated ubiquitination; this interaction competes with GNAS-binding and thus inhibits agonist-induced cAMP production. Interacts with OPN3; the interaction results in a decrease in MC1R-mediated cAMP signaling and ultimately a decrease in melanin production in melanocytes.

The protein resides in the cell membrane. Functionally, receptor for MSH (alpha, beta and gamma) and ACTH. The activity of this receptor is mediated by G proteins which activate adenylate cyclase. Mediates melanogenesis, the production of eumelanin (black/brown) and phaeomelanin (red/yellow), via regulation of cAMP signaling in melanocytes. This chain is Melanocyte-stimulating hormone receptor (MC1R), found in Rangifer tarandus (Reindeer).